We begin with the raw amino-acid sequence, 200 residues long: Translation machinery-associated protein 22 (200 aa).

An SUI1 domain is found at 95 to 166; that stretch reads VVIRREARTK…EVEAYIHSLL (72 aa).

The protein belongs to the DENR family. Interacts with the 40S ribosomal subunit.

Its subcellular location is the cytoplasm. In Kluyveromyces lactis (strain ATCC 8585 / CBS 2359 / DSM 70799 / NBRC 1267 / NRRL Y-1140 / WM37) (Yeast), this protein is Translation machinery-associated protein 22 (TMA22).